We begin with the raw amino-acid sequence, 575 residues long: Chaperonin 60 subunit alpha 2, chloroplastic (575 aa).

Residues 1 to 18 (MFAVSPSSFSPTTISPRR) are compositionally biased toward low complexity. Positions 1-27 (MFAVSPSSFSPTTISPRRSGQRNEPRK) are disordered. Residues 1–32 (MFAVSPSSFSPTTISPRRSGQRNEPRKFSVVR) constitute a chloroplast transit peptide.

This sequence belongs to the chaperonin (HSP60) family. In terms of assembly, part of the Cpn60 complex composed of 7 alpha and 7 beta subunits.

Its subcellular location is the plastid. It localises to the chloroplast. Involved in protein assisted folding. The sequence is that of Chaperonin 60 subunit alpha 2, chloroplastic (CPN60A2) from Arabidopsis thaliana (Mouse-ear cress).